The following is a 406-amino-acid chain: Leu/Ile/Val-binding protein homolog 5 (406 aa).

The signal sequence occupies residues 1-29 (MIGTRLPAWTRVLACGVAGLSLMTISAKA).

It belongs to the leucine-binding protein family.

Its function is as follows. Component of an amino-acid transport system. This Brucella abortus (strain 2308) protein is Leu/Ile/Val-binding protein homolog 5.